Consider the following 388-residue polypeptide: Tryptophan synthase beta chain (388 aa).

At Lys86 the chain carries N6-(pyridoxal phosphate)lysine.

This sequence belongs to the TrpB family. As to quaternary structure, tetramer of two alpha and two beta chains. Pyridoxal 5'-phosphate serves as cofactor.

It carries out the reaction (1S,2R)-1-C-(indol-3-yl)glycerol 3-phosphate + L-serine = D-glyceraldehyde 3-phosphate + L-tryptophan + H2O. Its pathway is amino-acid biosynthesis; L-tryptophan biosynthesis; L-tryptophan from chorismate: step 5/5. The beta subunit is responsible for the synthesis of L-tryptophan from indole and L-serine. This is Tryptophan synthase beta chain (trpB) from Buchnera aphidicola subsp. Acyrthosiphon pisum (strain APS) (Acyrthosiphon pisum symbiotic bacterium).